A 758-amino-acid chain; its full sequence is Probable C-mannosyltransferase DPY19L2 (758 aa).

Residues 1–58 (MRKQGVSSKRLQSSGRSQSKGRRGASLAREPEVEEEMEKSALGGGKLPRGSWRSSPGR) are disordered. The Nuclear portion of the chain corresponds to 1–107 (MRKQGVSSKR…ELQARRFSSR (107 aa)). A compositionally biased stretch (low complexity) spans 7–18 (SSKRLQSSGRSQ). A helical transmembrane segment spans residues 108–128 (TTLGIAVFVAILHWLHLVTLF). Over 129–194 (ENDRHFSHLS…INAIKRFHLY (66 aa)) the chain is Perinuclear space. Residues 195-215 (PEVIIASWYCTFMGIMNLFGL) traverse the membrane as a helical segment. At 216–241 (ETKTCWNVTRIEPLNEVQSCEGLGDP) the chain is on the nuclear side. Helical transmembrane passes span 242–262 (ACFY…LFFM) and 263–283 (YGAY…CFFF). The Nuclear portion of the chain corresponds to 284–296 (NHGEATRVMWTPP). A helical transmembrane segment spans residues 297 to 317 (LRESFSYPFLVLQMCILTLIL). Residues 318–343 (RTSSNDRRPFIALCLSNVAFMLPWQF) are Perinuclear space-facing. Residues 344 to 364 (AQFILFTQIASLFPMYVVGYI) form a helical membrane-spanning segment. Over 365–371 (EPSKFQK) the chain is Nuclear. A helical membrane pass occupies residues 372-392 (IIYMNMISVTLSFILMFGNSM). Topologically, residues 393–422 (YLSSYYSSSLLMTWAIILKRNEIQKLGVSK) are perinuclear space. The helical transmembrane segment at 423–443 (LNFWLIQGSAWWCGTIILKFL) threads the bilayer. Over 444 to 488 (TSKILGVSDHIRLSDLIAARILRYTDFDTLIYTCAPEFDFMEKAT) the chain is Nuclear. A helical membrane pass occupies residues 489-509 (PLRYTKTLLLPVVMVITCFIF). Over 510–533 (KKTVRDISYVLATNIYLRKQLLEH) the chain is Perinuclear space. A helical transmembrane segment spans residues 534–554 (SELAFHTLQLLVFTALAILIM). The Nuclear segment spans residues 555–758 (RLKMFLTPHM…NSVYRVLKVN (204 aa)).

It belongs to the dpy-19 family. Interacts with FAM209. In terms of tissue distribution, widely expressed with high expression in testis. Not detectable in ejaculated sperm (at protein level).

It localises to the nucleus inner membrane. Functionally, probable C-mannosyltransferase that mediates C-mannosylation of tryptophan residues on target proteins. Its function is as follows. Required during spermatogenesis for sperm head elongation and acrosome formation. Also plays a role in acrosome attachment to the nuclear envelope. In Homo sapiens (Human), this protein is Probable C-mannosyltransferase DPY19L2.